A 389-amino-acid polypeptide reads, in one-letter code: Trans-2-enoyl-CoA reductase [NADH] (389 aa).

NAD(+) is bound by residues 47–52 (GASTGY), 73–74 (FE), 110–111 (DA), and 138–139 (LA). Residue Tyr224 coordinates substrate. The Proton donor role is filled by Tyr234. Residues Lys243 and 272–274 (LVT) each bind NAD(+).

The protein belongs to the TER reductase family. In terms of assembly, monomer.

The enzyme catalyses a 2,3-saturated acyl-CoA + NAD(+) = a (2E)-enoyl-CoA + NADH + H(+). The protein operates within lipid metabolism; fatty acid biosynthesis. In terms of biological role, involved in the fatty acid synthesis (FAS II). Catalyzes the reduction of a carbon-carbon double bond in an enoyl moiety that is covalently linked to a coenzyme A (CoA). In Clostridium perfringens (strain ATCC 13124 / DSM 756 / JCM 1290 / NCIMB 6125 / NCTC 8237 / Type A), this protein is Trans-2-enoyl-CoA reductase [NADH].